A 181-amino-acid chain; its full sequence is Large ribosomal subunit protein uL5 (181 aa).

This sequence belongs to the universal ribosomal protein uL5 family. Part of the 50S ribosomal subunit; contacts the 5S rRNA and probably tRNA. Forms a bridge to the 30S subunit in the 70S ribosome.

Its function is as follows. This is one of the proteins that bind and probably mediate the attachment of the 5S RNA into the large ribosomal subunit, where it forms part of the central protuberance. In the 70S ribosome it contacts protein S13 of the 30S subunit (bridge B1b), connecting the 2 subunits; this bridge is implicated in subunit movement. May contact the P site tRNA; the 5S rRNA and some of its associated proteins might help stabilize positioning of ribosome-bound tRNAs. The protein is Large ribosomal subunit protein uL5 of Methanococcus aeolicus (strain ATCC BAA-1280 / DSM 17508 / OCM 812 / Nankai-3).